Consider the following 112-residue polypeptide: Citrate synthase (112 aa).

Active-site residues include histidine 39 and aspartate 97.

The protein belongs to the citrate synthase family.

The catalysed reaction is oxaloacetate + acetyl-CoA + H2O = citrate + CoA + H(+). It participates in carbohydrate metabolism; tricarboxylic acid cycle; isocitrate from oxaloacetate: step 1/2. This is Citrate synthase (gltA) from Bartonella vinsonii subsp. berkhoffii.